A 145-amino-acid polypeptide reads, in one-letter code: Flagellar assembly factor FliW (145 aa).

Belongs to the FliW family. In terms of assembly, interacts with translational regulator CsrA and flagellin(s).

The protein resides in the cytoplasm. Acts as an anti-CsrA protein, binds CsrA and prevents it from repressing translation of its target genes, one of which is flagellin. Binds to flagellin and participates in the assembly of the flagellum. This chain is Flagellar assembly factor FliW, found in Clostridium tetani (strain Massachusetts / E88).